A 208-amino-acid chain; its full sequence is T-cell surface glycoprotein CD8 beta chain (208 aa).

The N-terminal stretch at 1 to 21 (MQPWLWLVFSVKLSALWGSSA) is a signal peptide. The 110-residue stretch at 22-131 (LLQTPSSLLV…MVVFGTGTKL (110 aa)) folds into the Ig-like V-type domain. The Extracellular segment spans residues 22–168 (LLQTPSSLLV…KTQKGLTCGL (147 aa)). 3 N-linked (GlcNAc...) asparagine glycosylation sites follow: asparagine 34, asparagine 88, and asparagine 94. A disulfide bridge links cysteine 41 with cysteine 115. Residues 169–189 (ITLSLLVACILVLLVSLSVAI) form a helical membrane-spanning segment. Residues 190–208 (HFHCMRRRARIHFMKQFHK) lie on the Cytoplasmic side of the membrane.

In terms of assembly, forms disulfide-linked heterodimers with CD8A at the cell surface. Interacts with CD3D; this interaction couples TCR-CD3 with CD8. Interacts with LCK. Post-translationally, phosphorylated as a consequence of T-cell activation. In terms of processing, palmitoylated at the cytoplasmic tail and thereby targets the heterodimer CD8A/CD8B to lipid rafts unlike CD8A homodimers.

It localises to the cell membrane. Its function is as follows. Integral membrane glycoprotein that plays an essential role in the immune response and serves multiple functions in responses against both external and internal offenses. In T-cells, functions primarily as a coreceptor for MHC class I molecule:peptide complex. The antigens presented by class I peptides are derived from cytosolic proteins while class II derived from extracellular proteins. Interacts simultaneously with the T-cell receptor (TCR) and the MHC class I proteins presented by antigen presenting cells (APCs). In turn, recruits the Src kinase LCK to the vicinity of the TCR-CD3 complex. A palmitoylation site in the cytoplasmic tail of CD8B chain contributes to partitioning of CD8 into the plasma membrane lipid rafts where signaling proteins are enriched. Once LCK recruited, it initiates different intracellular signaling pathways by phosphorylating various substrates ultimately leading to lymphokine production, motility, adhesion and activation of cytotoxic T-lymphocytes (CTLs). Additionally, plays a critical role in thymic selection of CD8+ T-cells. The protein is T-cell surface glycoprotein CD8 beta chain (Cd8b) of Rattus norvegicus (Rat).